Consider the following 332-residue polypeptide: Cysteine and histidine-rich domain-containing protein 1 (332 aa).

N-acetylalanine is present on alanine 2. Positions 2–77 (ALLCYNRGCG…KPPEPVKPEV (76 aa)) are interaction with PPP5C. The Zn(2+) site is built by cysteine 5, cysteine 10, cysteine 24, histidine 27, cysteine 42, and cysteine 43. CHORD domains are found at residues 5 to 64 (CYNR…KGRH) and 157 to 216 (CKNG…TGKH). At threonine 47 the chain carries Phosphothreonine. Serine 51 is modified (phosphoserine). Residues cysteine 59, histidine 64, cysteine 157, cysteine 162, cysteine 176, histidine 179, cysteine 194, cysteine 195, cysteine 211, and histidine 216 each contribute to the Zn(2+) site. Residues 61–82 (KGRHNSEKPPEPVKPEVKTTEK) are disordered. Positions 64–82 (HNSEKPPEPVKPEVKTTEK) are enriched in basic and acidic residues. The interaction with HSP90AA1 and HSP90AB1 stretch occupies residues 65-316 (NSEKPPEPVK…AEPMQWASLE (252 aa)). In terms of domain architecture, CS spans 227-316 (VVPCRHDWHQ…AEPMQWASLE (90 aa)).

As to quaternary structure, interacts with HSP90AA1, HSP90AB1, PPP5C, ROCK1 and ROCK2.

Functionally, regulates centrosome duplication, probably by inhibiting the kinase activity of ROCK2. Proposed to act as co-chaperone for HSP90. May play a role in the regulation of NOD1 via a HSP90 chaperone complex. In vitro, has intrinsic chaperone activity. This function may be achieved by inhibiting association of ROCK2 with NPM1. Plays a role in ensuring the localization of the tyrosine kinase receptor EGFR to the plasma membrane, and thus ensures the subsequent regulation of EGFR activity and EGF-induced actin cytoskeleton remodeling. Involved in stress response. Prevents tumorigenesis. This is Cysteine and histidine-rich domain-containing protein 1 (CHORDC1) from Sus scrofa (Pig).